The sequence spans 173 residues: MAEKRNIFLVGPMGAGKSTIGRQLSQQLNMEFFDSDQEIEKRTGADISWVFDVEGESGFRLREQRVIDELTTKQGIVLATGGGSVKFRETRNFLSSRGIVVYLETTIEKQLARTKRDKKRPLLQNADSNRMILENLAYERNPFYEEIADIKVKTDDQSAKSVAFNIIRLLEEI.

14–19 (GAGKST) contributes to the ATP binding site. A Mg(2+)-binding site is contributed by Ser18. Positions 36, 60, and 82 each coordinate substrate. Arg120 is a binding site for ATP. Arg140 lines the substrate pocket. Residue Gln157 coordinates ATP.

Belongs to the shikimate kinase family. In terms of assembly, monomer. Mg(2+) is required as a cofactor.

The protein localises to the cytoplasm. It catalyses the reaction shikimate + ATP = 3-phosphoshikimate + ADP + H(+). Its pathway is metabolic intermediate biosynthesis; chorismate biosynthesis; chorismate from D-erythrose 4-phosphate and phosphoenolpyruvate: step 5/7. In terms of biological role, catalyzes the specific phosphorylation of the 3-hydroxyl group of shikimic acid using ATP as a cosubstrate. In Buchnera aphidicola subsp. Acyrthosiphon pisum (strain APS) (Acyrthosiphon pisum symbiotic bacterium), this protein is Shikimate kinase.